The following is an 88-amino-acid chain: UPF0297 protein SSA_2241 (88 aa).

Belongs to the UPF0297 family.

The chain is UPF0297 protein SSA_2241 from Streptococcus sanguinis (strain SK36).